Reading from the N-terminus, the 350-residue chain is Bifunctional methylenetetrahydrofolate dehydrogenase/cyclohydrolase, mitochondrial (350 aa).

The transit peptide at 1 to 35 directs the protein to the mitochondrion; that stretch reads MAAASFITSLVTRLLRSAQSGRLHQRPFHLSAVRN. An N6-acetyllysine; alternate modification is found at Lys50. Residue Lys50 forms a Glycyl lysine isopeptide (Lys-Gly) (interchain with G-Cter in SUMO2); alternate linkage. Substrate-binding positions include 84-88 and 131-133; these read YVLNK and VQL. Residues 200 to 202 and Arg233 each bind NAD(+); that span reads GRS. 309–313 is a binding site for substrate; the sequence is PGGVG.

It belongs to the tetrahydrofolate dehydrogenase/cyclohydrolase family. In terms of assembly, homodimer. Mg(2+) is required as a cofactor.

It is found in the mitochondrion. It carries out the reaction (6R)-5,10-methylene-5,6,7,8-tetrahydrofolate + NAD(+) = (6R)-5,10-methenyltetrahydrofolate + NADH. It catalyses the reaction (6R)-5,10-methenyltetrahydrofolate + H2O = (6R)-10-formyltetrahydrofolate + H(+). In terms of biological role, although its dehydrogenase activity is NAD-specific, it can also utilize NADP at a reduced efficiency. The sequence is that of Bifunctional methylenetetrahydrofolate dehydrogenase/cyclohydrolase, mitochondrial (MTHFD2) from Bos taurus (Bovine).